The sequence spans 689 residues: Glycine--tRNA ligase beta subunit (689 aa).

Belongs to the class-II aminoacyl-tRNA synthetase family. In terms of assembly, tetramer of two alpha and two beta subunits.

It localises to the cytoplasm. It catalyses the reaction tRNA(Gly) + glycine + ATP = glycyl-tRNA(Gly) + AMP + diphosphate. The sequence is that of Glycine--tRNA ligase beta subunit from Actinobacillus pleuropneumoniae serotype 5b (strain L20).